The primary structure comprises 305 residues: MGRLTVNLAGVTFKNPVMPASGTAAYGQQMAQQLDLSALGGLVIKSTTAEPKAGNPRPTTAETTAGWLNAIGLKNPGIDNVLADKLPWLATHYPDLPIIGSVAGASFDEYVAVARKMASAPNVKLLEINISCPNVDHGGLAFGTDPATVTALTKAIVAAVDKPVFMKLTPNVTDIVPIALAAEAGGAAGLTMINTLTGMGIDLATRQPILAHGTGGLSGKAIHPLAVRMIHDVRQHTKLPIIGVGGVFTPADVLEFYLAGANAVQVGAATYGHPTACTDIIAGLPAAMDQYGITSLQALIQEVQG.

Residues Ser-21 and Lys-45 to Ser-46 contribute to the FMN site. Substrate is bound by residues Lys-45, Asn-69 to Leu-73, and Asn-129. Asn-129 is a binding site for FMN. Residue Cys-132 is the Nucleophile of the active site. Residues Lys-167 and Ile-193 each coordinate FMN. Asn-194–Thr-195 provides a ligand contact to substrate. Residues Gly-219 and Gly-245 to Gly-246 each bind FMN.

This sequence belongs to the dihydroorotate dehydrogenase family. Type 1 subfamily. As to quaternary structure, homodimer. FMN is required as a cofactor.

The protein localises to the cytoplasm. It catalyses the reaction (S)-dihydroorotate + fumarate = orotate + succinate. The protein operates within pyrimidine metabolism; UMP biosynthesis via de novo pathway. In terms of biological role, catalyzes the conversion of dihydroorotate to orotate with fumarate as the electron acceptor. The protein is Dihydroorotate dehydrogenase A (fumarate) (pyrD) of Lactiplantibacillus plantarum (strain ATCC BAA-793 / NCIMB 8826 / WCFS1) (Lactobacillus plantarum).